A 184-amino-acid chain; its full sequence is Adenylate kinase (184 aa).

ATP is bound at residue Gly-12–Thr-17. The tract at residues Ser-32 to Val-61 is NMP. AMP-binding positions include Thr-33, Arg-38, Glu-59–Val-61, Gly-85–Arg-88, and Gln-92. An LID region spans residues Ile-126 to Asp-132. Arg-127 contributes to the ATP binding site. Residues Arg-129 and Arg-140 each coordinate AMP. Residue Gly-168 participates in ATP binding.

Belongs to the adenylate kinase family. In terms of assembly, monomer.

The protein resides in the cytoplasm. The enzyme catalyses AMP + ATP = 2 ADP. The protein operates within purine metabolism; AMP biosynthesis via salvage pathway; AMP from ADP: step 1/1. Catalyzes the reversible transfer of the terminal phosphate group between ATP and AMP. Plays an important role in cellular energy homeostasis and in adenine nucleotide metabolism. This chain is Adenylate kinase, found in Prochlorococcus marinus subsp. pastoris (strain CCMP1986 / NIES-2087 / MED4).